The following is a 462-amino-acid chain: UDP-N-acetylmuramoylalanine--D-glutamate ligase (462 aa).

112–118 (GTNGKTT) lines the ATP pocket.

This sequence belongs to the MurCDEF family.

It is found in the cytoplasm. The enzyme catalyses UDP-N-acetyl-alpha-D-muramoyl-L-alanine + D-glutamate + ATP = UDP-N-acetyl-alpha-D-muramoyl-L-alanyl-D-glutamate + ADP + phosphate + H(+). It functions in the pathway cell wall biogenesis; peptidoglycan biosynthesis. In terms of biological role, cell wall formation. Catalyzes the addition of glutamate to the nucleotide precursor UDP-N-acetylmuramoyl-L-alanine (UMA). In Nostoc sp. (strain PCC 7120 / SAG 25.82 / UTEX 2576), this protein is UDP-N-acetylmuramoylalanine--D-glutamate ligase.